The sequence spans 118 residues: Peptidyl-prolyl cis-trans isomerase Pin1 (118 aa).

Disordered stretches follow at residues 1–37 (MSSEKVRASHILIKHQGSRRKSSWKDPDGSLISATTR) and 61–84 (LASRHSHCSSAKRGGDLGPFGRGQ). The PpiC domain occupies 3 to 118 (SEKVRASHIL…SGVHIIKRTG (116 aa)). Residues 12–22 (LIKHQGSRRKS) show a composition bias toward basic residues.

It belongs to the PpiC/parvulin rotamase family. The N-terminus is blocked. In terms of tissue distribution, expressed in roots, stems, leaves, flowers and seedlings.

It localises to the cytoplasm. The protein resides in the nucleus. The enzyme catalyses [protein]-peptidylproline (omega=180) = [protein]-peptidylproline (omega=0). Inhibited in vitro by juglone. Functionally, prolyl cis/trans isomerase with specificity for phospho-Ser-Pro bonds. This Digitalis lanata (Grecian foxglove) protein is Peptidyl-prolyl cis-trans isomerase Pin1 (PARV12.8).